Consider the following 624-residue polypeptide: MTIKKYTLLTALSVTAFSGWAQGNNTTDNNNEMVVTANRFPQPKSSVLAPVDVVTRADIDRWQSTNINDVLRRLPGINIAQYGGPRQLSSLFIRGTNSSHVLVLVDGVRLNQAGISGSSDLSQIPISLVQRIEYIRGPRSAVYGSDAIGGVVNIITERETLGSTLTAGLGSNGYQNYNGSTQQKLGDDTTITLAGNYDYSKGYDVVAKGNTGMASQPDRDGYLGKMLWLGANHKFNEQFSGFVRGYGFDNRSDYDSYYYPGSPLVDTRSLSSRTYDTGINFSNGGYASQLIGSYSRTQDYNYDPSYGRYDQSATLDDISQYNLQWTNTYQLGLGNVGGGLDWQKQTTEPGTNYLSNGYEQRNTGVYGTVQQFVGPVTLEGAIRGDDNSQFGWHTTWQSSAGWEFVDGYRLIGSYGTAFKAPNLGQIYSSTYGNRDLKPEESTQWEAAITGITGPLDWRLSAYRNDIDQMIATRGVYPNSRYYNVEKATIKGVEWTGSFETGPLSHQVTLEYLDPRNADTHEILARRAKQQVKYQLDWQMADLDWSVTYQYIGQRYDSVFDPITYAASPVKLAGISLWDLAVSYPVTSHLTVRGRIANLFDKDYEMVYGYQTPGREYYFTGSYNF.

The N-terminal stretch at 1-21 (MTIKKYTLLTALSVTAFSGWA) is a signal peptide. The TonB box signature appears at 31–38 (NEMVVTAN). Positions 43–157 (PKSSVLAPVD…IGGVVNIITE (115 aa)) constitute a TBDR plug domain. Cyanocob(III)alamin-binding positions include Leu-88, Ser-90, Asn-97, and 115–116 (IS). The TBDR beta-barrel domain maps to 160–624 (TLGSTLTAGL…EYYFTGSYNF (465 aa)). The next 3 membrane-spanning stretches (beta stranded) occupy residues 163–170 (STLTAGLG), 174–183 (YQNYNGSTQQ), and 189–200 (TTITLAGNYDYS). Ca(2+)-binding residues include Asp-204, Gln-216, Asp-218, and Asp-220. 2 consecutive transmembrane segments (beta stranded) span residues 222–232 (YLGKMLWLGAN) and 237–253 (EQFS…NRSD). Ca(2+) is bound by residues Tyr-254, Asp-255, and Asp-266. A run of 17 beta stranded transmembrane segments spans residues 268-282 (RSLS…INFS), 284-301 (GGYA…QDYN), 314-330 (TLDD…NTYQ), 333-342 (LGNVGGGLDW), 358-374 (YEQR…QFVG), 376-386 (VTLEGAIRGDD), 390-405 (FGWH…WEFV), 408-422 (YRLI…KAPN), 440-449 (ESTQWEAAIT), 455-464 (LDWRLSAYRN), 481-498 (YYNV…TGSF), 502-517 (PLSH…PRNA), 525-537 (RRAK…QLDW), 543-557 (DWSV…RYDS), 568-582 (PVKL…LAVS), 595-606 (IANLFDKDYEMV), and 612-624 (PGRE…SYNF). Cyanocob(III)alamin is bound at residue Thr-314. Arg-525 contributes to the cyanocob(III)alamin binding site. The short motif at 607–624 (YGYQTPGREYYFTGSYNF) is the TonB C-terminal box element.

It belongs to the TonB-dependent receptor family. BtuB (TC 1.B.14.3.1) subfamily.

It localises to the cell outer membrane. Its function is as follows. Involved in the active translocation of vitamin B12 (cyanocobalamin) across the outer membrane to the periplasmic space. It derives its energy for transport by interacting with the trans-periplasmic membrane protein TonB. This chain is Vitamin B12 transporter BtuB, found in Yersinia pseudotuberculosis serotype O:1b (strain IP 31758).